Consider the following 263-residue polypeptide: Shikimate dehydrogenase (NADP(+)) (263 aa).

Residues 16–18 (SKS) and Thr-65 contribute to the shikimate site. Catalysis depends on Lys-69, which acts as the Proton acceptor. 2 residues coordinate shikimate: Asn-90 and Asp-105. NADP(+)-binding positions include 125 to 129 (GSGGS) and Leu-208. Tyr-210 contributes to the shikimate binding site. Position 230 (Gly-230) interacts with NADP(+).

This sequence belongs to the shikimate dehydrogenase family. As to quaternary structure, homodimer.

It catalyses the reaction shikimate + NADP(+) = 3-dehydroshikimate + NADPH + H(+). It participates in metabolic intermediate biosynthesis; chorismate biosynthesis; chorismate from D-erythrose 4-phosphate and phosphoenolpyruvate: step 4/7. Involved in the biosynthesis of the chorismate, which leads to the biosynthesis of aromatic amino acids. Catalyzes the reversible NADPH linked reduction of 3-dehydroshikimate (DHSA) to yield shikimate (SA). The protein is Shikimate dehydrogenase (NADP(+)) of Helicobacter pylori (strain P12).